The following is a 458-amino-acid chain: Bifunctional protein GlmU (458 aa).

Positions 1–229 (MKEKALSIVI…FMEVEGVNNR (229 aa)) are pyrophosphorylase. UDP-N-acetyl-alpha-D-glucosamine-binding positions include 11–14 (LAAG), lysine 25, glutamine 76, 81–82 (GT), 103–105 (YGD), glycine 140, glutamate 154, asparagine 169, and asparagine 227. Aspartate 105 is a Mg(2+) binding site. Residue asparagine 227 coordinates Mg(2+). The interval 230-250 (QQLARLERYYQRKQADNLLLA) is linker. The segment at 251–458 (GVALADPERF…WQRPTKQTKK (208 aa)) is N-acetyltransferase. UDP-N-acetyl-alpha-D-glucosamine contacts are provided by arginine 333 and lysine 351. Residue histidine 363 is the Proton acceptor of the active site. UDP-N-acetyl-alpha-D-glucosamine is bound by residues tyrosine 366 and asparagine 377. Acetyl-CoA contacts are provided by residues alanine 380, 386–387 (NY), serine 405, alanine 423, and arginine 440.

In the N-terminal section; belongs to the N-acetylglucosamine-1-phosphate uridyltransferase family. It in the C-terminal section; belongs to the transferase hexapeptide repeat family. Homotrimer. The cofactor is Mg(2+).

The protein localises to the cytoplasm. It carries out the reaction alpha-D-glucosamine 1-phosphate + acetyl-CoA = N-acetyl-alpha-D-glucosamine 1-phosphate + CoA + H(+). The enzyme catalyses N-acetyl-alpha-D-glucosamine 1-phosphate + UTP + H(+) = UDP-N-acetyl-alpha-D-glucosamine + diphosphate. It participates in nucleotide-sugar biosynthesis; UDP-N-acetyl-alpha-D-glucosamine biosynthesis; N-acetyl-alpha-D-glucosamine 1-phosphate from alpha-D-glucosamine 6-phosphate (route II): step 2/2. Its pathway is nucleotide-sugar biosynthesis; UDP-N-acetyl-alpha-D-glucosamine biosynthesis; UDP-N-acetyl-alpha-D-glucosamine from N-acetyl-alpha-D-glucosamine 1-phosphate: step 1/1. The protein operates within bacterial outer membrane biogenesis; LPS lipid A biosynthesis. Its function is as follows. Catalyzes the last two sequential reactions in the de novo biosynthetic pathway for UDP-N-acetylglucosamine (UDP-GlcNAc). The C-terminal domain catalyzes the transfer of acetyl group from acetyl coenzyme A to glucosamine-1-phosphate (GlcN-1-P) to produce N-acetylglucosamine-1-phosphate (GlcNAc-1-P), which is converted into UDP-GlcNAc by the transfer of uridine 5-monophosphate (from uridine 5-triphosphate), a reaction catalyzed by the N-terminal domain. The polypeptide is Bifunctional protein GlmU (Pasteurella multocida (strain Pm70)).